The sequence spans 514 residues: 2-isopropylmalate synthase (514 aa).

The 263-residue stretch at 4-266 (INVFDTSLRD…KTGLKLSELK (263 aa)) folds into the Pyruvate carboxyltransferase domain. D13, H201, H203, and N237 together coordinate Mn(2+). The regulatory domain stretch occupies residues 390–514 (ELTALQVTYG…AKREMAKVES (125 aa)).

It belongs to the alpha-IPM synthase/homocitrate synthase family. LeuA type 1 subfamily. In terms of assembly, homodimer. It depends on Mn(2+) as a cofactor.

The protein resides in the cytoplasm. The enzyme catalyses 3-methyl-2-oxobutanoate + acetyl-CoA + H2O = (2S)-2-isopropylmalate + CoA + H(+). Its pathway is amino-acid biosynthesis; L-leucine biosynthesis; L-leucine from 3-methyl-2-oxobutanoate: step 1/4. Functionally, catalyzes the condensation of the acetyl group of acetyl-CoA with 3-methyl-2-oxobutanoate (2-ketoisovalerate) to form 3-carboxy-3-hydroxy-4-methylpentanoate (2-isopropylmalate). This is 2-isopropylmalate synthase from Shouchella clausii (strain KSM-K16) (Alkalihalobacillus clausii).